The chain runs to 343 residues: C5a anaphylatoxin chemotactic receptor 2 (343 aa).

The Extracellular segment spans residues 1-44 (MLNDTTSKDYEYEYDQEQYSDLLNVPVDCPAGNCFSNDAYLIVL). N-linked (GlcNAc...) asparagine glycosylation is present at N3. A helical transmembrane segment spans residues 45–67 (LGLYSVIFLVGVPGNTLLAWVTW). The Cytoplasmic segment spans residues 68–78 (KESRHRLGASW). The chain crosses the membrane as a helical span at residues 79–101 (FLHLTMADLLCCVSLPFLAVPIA). Over 102-120 (QKGHWPYGTAGCWLLSSIT) the chain is Extracellular. The cysteines at positions 113 and 192 are disulfide-linked. A helical transmembrane segment spans residues 121–143 (VLSMYASVLLLTGLSGDLFLLAF). Residues 144 to 155 (RPSWKNADQRTC) lie on the Cytoplasmic side of the membrane. Residues 156–178 (GVRVVQVSSWMLALLLTVPGAVY) form a helical membrane-spanning segment. Residues 179–208 (RKLLQEHYPPRLVCGTNYGGSVTAEVTITT) are Extracellular-facing. A helical transmembrane segment spans residues 209 to 231 (VRFLFGFLVPLVFMASCHGILQR). At 232–243 (QMARRHWPLGTA) the chain is on the cytoplasmic side. Residues 244 to 266 (VVVGFFICWTPFHLLRVIIAVAS) traverse the membrane as a helical segment. The Extracellular segment spans residues 267 to 280 (SHSPLLAWALEAEP). The helical transmembrane segment at 281–300 (LVTGLALAHSALNPIMFLYF) threads the bilayer. At 301–343 (GRKQLCKSLQAACHWALRDLQDEEESAVTKVSTSQEMVSEMPV) the chain is on the cytoplasmic side. S326 bears the Phosphoserine mark.

Belongs to the G-protein coupled receptor 1 family. In terms of assembly, interacts with C3 (the anaphylatoxin peptide C3a and the adipogenic hormone ASP); the interaction occurs with higher affinity for ASP, enhancing the phosphorylation and activation of GPR77, recruitment of ARRB2 to the cell surface and endocytosis of GRP77.

The protein resides in the cell membrane. Receptor for the chemotactic and inflammatory C3a, C4a and C5a anaphylatoxin peptides and also for their dearginated forms ASP/C3adesArg, C4adesArg and C5adesArg respectively. Couples weakly to G(i)-mediated signaling pathways. This chain is C5a anaphylatoxin chemotactic receptor 2 (C5ar2), found in Rattus norvegicus (Rat).